The primary structure comprises 443 residues: Trigger factor (443 aa).

One can recognise a PPIase FKBP-type domain in the interval 165-250; it reads GDQIVMDFLG…VKEVKKPVPA (86 aa).

This sequence belongs to the FKBP-type PPIase family. Tig subfamily.

Its subcellular location is the cytoplasm. It catalyses the reaction [protein]-peptidylproline (omega=180) = [protein]-peptidylproline (omega=0). Functionally, involved in protein export. Acts as a chaperone by maintaining the newly synthesized protein in an open conformation. Functions as a peptidyl-prolyl cis-trans isomerase. This chain is Trigger factor, found in Roseobacter denitrificans (strain ATCC 33942 / OCh 114) (Erythrobacter sp. (strain OCh 114)).